A 404-amino-acid chain; its full sequence is Arginine biosynthesis bifunctional protein ArgJ (404 aa).

Residues T166, K189, T200, E280, N399, and S404 each coordinate substrate. Catalysis depends on T200, which acts as the Nucleophile.

It belongs to the ArgJ family. Heterotetramer of two alpha and two beta chains.

It is found in the cytoplasm. The catalysed reaction is N(2)-acetyl-L-ornithine + L-glutamate = N-acetyl-L-glutamate + L-ornithine. It carries out the reaction L-glutamate + acetyl-CoA = N-acetyl-L-glutamate + CoA + H(+). The protein operates within amino-acid biosynthesis; L-arginine biosynthesis; L-ornithine and N-acetyl-L-glutamate from L-glutamate and N(2)-acetyl-L-ornithine (cyclic): step 1/1. It functions in the pathway amino-acid biosynthesis; L-arginine biosynthesis; N(2)-acetyl-L-ornithine from L-glutamate: step 1/4. Catalyzes two activities which are involved in the cyclic version of arginine biosynthesis: the synthesis of N-acetylglutamate from glutamate and acetyl-CoA as the acetyl donor, and of ornithine by transacetylation between N(2)-acetylornithine and glutamate. This Mycolicibacterium paratuberculosis (strain ATCC BAA-968 / K-10) (Mycobacterium paratuberculosis) protein is Arginine biosynthesis bifunctional protein ArgJ.